The primary structure comprises 891 residues: Inter-alpha-trypsin inhibitor heavy chain H3 (891 aa).

A signal peptide spans Met1–Ser20. The propeptide occupies Gly21–Ser34. Positions Leu29–Glu158 constitute a VIT domain. N-linked (GlcNAc...) asparagine glycosylation occurs at Asn91. The VWFA domain occupies Ser284–Val467. Aspartate 1-(chondroitin 4-sulfate)-ester is present on Asp651. Positions Pro652–Phe891 are excised as a propeptide.

Belongs to the ITIH family. As to quaternary structure, I-alpha-I plasma protease inhibitors are assembled from one or two heavy chains (H1, H2 or H3) and one light chain, bikunin. Inter-alpha-inhibitor (I-alpha-I) is composed of H1, H2 and bikunin, inter-alpha-like inhibitor (I-alpha-LI) of H2 and bikunin, and pre-alpha-inhibitor (P-alpha-I) of H3 and bikunin.

It is found in the secreted. May act as a carrier of hyaluronan in serum or as a binding protein between hyaluronan and other matrix protein, including those on cell surfaces in tissues to regulate the localization, synthesis and degradation of hyaluronan which are essential to cells undergoing biological processes. The chain is Inter-alpha-trypsin inhibitor heavy chain H3 (ITIH3) from Bos taurus (Bovine).